The following is a 109-amino-acid chain: UPF0235 protein MA_4097 (109 aa).

It belongs to the UPF0235 family.

The protein is UPF0235 protein MA_4097 of Methanosarcina acetivorans (strain ATCC 35395 / DSM 2834 / JCM 12185 / C2A).